Consider the following 514-residue polypeptide: uncharacterized protein (514 aa).

3 disordered regions span residues 1-68, 109-244, and 272-484; these read MSSP…SESE, VPPP…RQAS, and RPAV…AQGC. Basic residues predominate over residues 368-384; that stretch reads KPQKPKHSSPGKKPAGR. Over residues 385–405 the composition is skewed to basic and acidic residues; it reads KTRESQAAAREDNDPNRDEVP.

This is an uncharacterized protein from Homo sapiens (Human).